A 303-amino-acid polypeptide reads, in one-letter code: UDP-N-acetylenolpyruvoylglucosamine reductase (303 aa).

Residues K29–K196 form the FAD-binding PCMH-type domain. R174 is an active-site residue. S225 functions as the Proton donor in the catalytic mechanism. E295 is an active-site residue.

The protein belongs to the MurB family. It depends on FAD as a cofactor.

It localises to the cytoplasm. It catalyses the reaction UDP-N-acetyl-alpha-D-muramate + NADP(+) = UDP-N-acetyl-3-O-(1-carboxyvinyl)-alpha-D-glucosamine + NADPH + H(+). It participates in cell wall biogenesis; peptidoglycan biosynthesis. In terms of biological role, cell wall formation. This Bacillus licheniformis (strain ATCC 14580 / DSM 13 / JCM 2505 / CCUG 7422 / NBRC 12200 / NCIMB 9375 / NCTC 10341 / NRRL NRS-1264 / Gibson 46) protein is UDP-N-acetylenolpyruvoylglucosamine reductase.